The primary structure comprises 710 residues: Amyloid beta precursor protein binding family B member 1 (710 aa).

The residue at position 135 (S135) is a Phosphoserine. 2 disordered regions span residues 143–256 (EQGP…SDLP) and 276–300 (GTTQ…ESQL). Over residues 145–173 (GPDEGEEKAAGEAEEDDEDEEEEEEEEDL) the composition is skewed to acidic residues. An N6-acetyllysine modification is found at K204. Positions 223–234 (SWATLSQGSPSY) are enriched in polar residues. Residues 253–285 (SDLPAGWMRVQDTSGTYYWHIPTGTTQWEPPGR) enclose the WW domain. Positions 287 to 299 (SPSQGSSPQEESQ) are enriched in low complexity. A PID 1 domain is found at 370 to 509 (FAVRSLGWVE…SKIMSERRNA (140 aa)). S459 is modified (phosphoserine; by PKC). A Phosphoserine modification is found at S517. One can recognise a PID 2 domain in the interval 542 to 699 (KFQVYYLGNV…RRGVQSLWGS (158 aa)). Position 547 is a phosphotyrosine; by ABL1 (Y547). S610 bears the Phosphoserine; by SGK1 mark. Position 701 is an N6-acetyllysine (K701).

In terms of assembly, component of a complex, at least composed of APBB1, RASD1/DEXRAS1 and APP. Interacts (via PID domain 2) with APP (with the intracellular domain of the amyloid-beta precursor protein). Interacts (via PID domain 2) with RASD1/DEXRAS1; impairs the transcription activation activity. Interacts (via PID domain 1) with KAT5/TIP60. Interacts (via the WW domain) with the proline-rich region of APBB1IP. Interacts with TSHZ1 and TSHZ2. Interacts (via the WW domain) with histone H2AX (when phosphorylated on 'Tyr-142') and the proline-rich region of ENAH. Interacts with MAPK8. Interacts (via PID domain 1) with TSHZ3 (via homeobox domain). Interacts with SET. Found in a trimeric complex with HDAC1 and TSHZ3; the interaction between HDAC1 and APBB1 is mediated by TSHZ3. Interacts (via WWW domain) with NEK6. Interacts (via WWW domain) with ABL1. Interacts with RNF157. Interacts with ARF6. Post-translationally, polyubiquitination by RNF157 leads to degradation by the proteasome. In terms of processing, phosphorylation at Ser-610 by SGK1 promotes its localization to the nucleus. Phosphorylated following nuclear translocation. Phosphorylation at Tyr-546 by ABL1 enhances transcriptional activation activity and reduces the affinity for RASD1/DEXRAS1. Acetylation at Lys-204 and Lys-701 by KAT5 promotes its transcription activator activity. Phosphorylated at Ser-459 by PKC upon insulin activation. In terms of tissue distribution, expressed in the brain, retinal lens and muscle cells (at protein level).

Its subcellular location is the cell membrane. The protein resides in the cytoplasm. The protein localises to the nucleus. It is found in the cell projection. It localises to the growth cone. Its subcellular location is the nucleus speckle. Transcription coregulator that can have both coactivator and corepressor functions. Adapter protein that forms a transcriptionally active complex with the gamma-secretase-derived amyloid precursor protein (APP) intracellular domain. Plays a central role in the response to DNA damage by translocating to the nucleus and inducing apoptosis. May act by specifically recognizing and binding histone H2AX phosphorylated on 'Tyr-142' (H2AXY142ph) at double-strand breaks (DSBs), recruiting other pro-apoptosis factors such as MAPK8/JNK1. Required for histone H4 acetylation at double-strand breaks (DSBs). Its ability to specifically bind modified histones and chromatin modifying enzymes such as KAT5/TIP60, probably explains its transcription activation activity. Functions in association with TSHZ3, SET and HDAC factors as a transcriptional repressor, that inhibits the expression of CASP4. Associates with chromatin in a region surrounding the CASP4 transcriptional start site(s). Involved in hippocampal neurite branching and neuromuscular junction formation, as a result plays a role in spatial memory functioning. Plays a role in the maintenance of lens transparency. May play a role in muscle cell strength. Acts as a molecular adapter that functions in neurite outgrowth by activating the RAC1-ARF6 axis upon insulin treatment. The protein is Amyloid beta precursor protein binding family B member 1 of Mus musculus (Mouse).